A 387-amino-acid polypeptide reads, in one-letter code: 3-ketoacyl-CoA thiolase (387 aa).

Catalysis depends on Cys-91, which acts as the Acyl-thioester intermediate. Active-site proton acceptor residues include His-343 and Cys-373.

The protein belongs to the thiolase-like superfamily. Thiolase family. In terms of assembly, heterotetramer of two alpha chains (FadB) and two beta chains (FadA).

Its subcellular location is the cytoplasm. It catalyses the reaction an acyl-CoA + acetyl-CoA = a 3-oxoacyl-CoA + CoA. It functions in the pathway lipid metabolism; fatty acid beta-oxidation. In terms of biological role, catalyzes the final step of fatty acid oxidation in which acetyl-CoA is released and the CoA ester of a fatty acid two carbons shorter is formed. This chain is 3-ketoacyl-CoA thiolase, found in Aeromonas salmonicida (strain A449).